Consider the following 158-residue polypeptide: NAD(P)H-quinone oxidoreductase subunit J, chloroplastic (158 aa).

It belongs to the complex I 30 kDa subunit family. NDH is composed of at least 16 different subunits, 5 of which are encoded in the nucleus.

Its subcellular location is the plastid. The protein resides in the chloroplast thylakoid membrane. It catalyses the reaction a plastoquinone + NADH + (n+1) H(+)(in) = a plastoquinol + NAD(+) + n H(+)(out). It carries out the reaction a plastoquinone + NADPH + (n+1) H(+)(in) = a plastoquinol + NADP(+) + n H(+)(out). Functionally, NDH shuttles electrons from NAD(P)H:plastoquinone, via FMN and iron-sulfur (Fe-S) centers, to quinones in the photosynthetic chain and possibly in a chloroplast respiratory chain. The immediate electron acceptor for the enzyme in this species is believed to be plastoquinone. Couples the redox reaction to proton translocation, and thus conserves the redox energy in a proton gradient. This is NAD(P)H-quinone oxidoreductase subunit J, chloroplastic from Aethionema grandiflorum (Persian stone-cress).